An 801-amino-acid chain; its full sequence is Conserved oligomeric Golgi complex subunit 4 (801 aa).

The disordered stretch occupies residues I397–K427.

Belongs to the COG4 family. In terms of assembly, component of the conserved oligomeric Golgi complex which is composed of eight different subunits and is required for normal Golgi morphology and localization.

It localises to the golgi apparatus membrane. Functionally, required for normal Golgi function. The chain is Conserved oligomeric Golgi complex subunit 4 (cogc-4) from Caenorhabditis elegans.